Here is a 387-residue protein sequence, read N- to C-terminus: Methyltransferase phomM (387 aa).

The tract at residues 98–223 (PHRPKDLHIL…QSVADLFTTL (126 aa)) is methyltransferase domain.

This sequence belongs to the class I-like SAM-binding methyltransferase superfamily. Erg6/SMT family.

It participates in mycotoxin biosynthesis. Functionally, methyltransferase; part of the gene cluster that mediates the biosynthesis of the phomopsins, a group of hexapeptide mycotoxins which infects lupins and causes lupinosis disease in livestock. Within the pathway, phomM acts as an S-adenosylmethionine-dependent alpha-N-methyltransferase that catalyzes two successive N-methylation reactions, converting N-desmethyl-phomopsin A to phomopsin A and phomopsin A further to an N,N-dimethylated congener called phomopsin E. The pathway starts with the processing of the precursor phomA by several endopeptidases including kexin proteases as well as the cluster-specific S41 family peptidase phomP1 and the oligopeptidase phomG to produce 10 identical copies of the hexapeptide Tyr-Val-Ile-Pro-Ile-Asp. After being excised from the precursor peptide, the core peptides are cyclized and modified post-translationally by enzymes encoded within the gene cluster. The timing and order of proteolysis of the phomA precursor and PTMs are still unknown. Two tyrosinase-like enzymes, phomQ1 and phomQ2, catalyze the chlorination and hydroxylation of Tyr, respectively. PhomYb, is proposed to be involved in the construction of the macrocyclic structure. The other 4 ustYa family proteins may be involved in PTMs that generate the unique structure of phomopsin A. PhomYa is required for the hydroxylation of C-beta of Tyr. PhomYc, phomYd, and phomYe are responsible for the biosynthesis of 2,3-dehydroisoleucine (dIle), 2,3-dehydroaspartic acid (dAsp), and 3,4-dehydroproline (dPro), respectively. While dIle formation by phomYc is indispensable for the installation of dAsp by phomYd, the order of the other PTMs have not been elucidated yet. Most of the biosynthetic enzymes likely have broad substrate specificity, and thus, there might be a metabolic grid from a precursor to phomopsin A. The enzyme(s) responsible for the biosynthesis of 3,4-dehydrovaline (dVal) have also not been identified yet. Finally, phomM acts as an S-adenosylmethionine-dependent alpha-N-methyltransferase that catalyzes two successive N-methylation reactions, converting N-desmethyl-phomopsin A to phomopsin A and phomopsin A further to an N,N-dimethylated congener called phomopsin E. This is Methyltransferase phomM from Diaporthe leptostromiformis (Lupinosis disease fungus).